We begin with the raw amino-acid sequence, 128 residues long: Histone H2A (128 aa).

It belongs to the histone H2A family. The nucleosome is a histone octamer containing two molecules each of H2A, H2B, H3 and H4 assembled in one H3-H4 heterotetramer and two H2A-H2B heterodimers. The octamer wraps approximately 147 bp of DNA.

Its subcellular location is the nucleus. It is found in the chromosome. Functionally, core component of nucleosome. Nucleosomes wrap and compact DNA into chromatin, limiting DNA accessibility to the cellular machineries which require DNA as a template. Histones thereby play a central role in transcription regulation, DNA repair, DNA replication and chromosomal stability. DNA accessibility is regulated via a complex set of post-translational modifications of histones, also called histone code, and nucleosome remodeling. The chain is Histone H2A (HTA1) from Encephalitozoon cuniculi (strain GB-M1) (Microsporidian parasite).